Consider the following 239-residue polypeptide: ATP synthase subunit a (239 aa).

5 helical membrane-spanning segments follow: residues 13 to 33 (IWFDGTIVLMVLLTCIIVFAF), 75 to 95 (FHLMAFTLFMFVLVSNILGLV), 113 to 133 (DPIVTLTLAMMMIVLTHFFGM), 174 to 194 (GNIFAGEVLLGLIAGTVASVG), and 208 to 230 (WVAFSIFIGCIQAFIFVTLSMVY).

This sequence belongs to the ATPase A chain family. In terms of assembly, F-type ATPases have 2 components, CF(1) - the catalytic core - and CF(0) - the membrane proton channel. CF(1) has five subunits: alpha(3), beta(3), gamma(1), delta(1), epsilon(1). CF(0) has three main subunits: a(1), b(2) and c(9-12). The alpha and beta chains form an alternating ring which encloses part of the gamma chain. CF(1) is attached to CF(0) by a central stalk formed by the gamma and epsilon chains, while a peripheral stalk is formed by the delta and b chains.

The protein resides in the cell membrane. Its function is as follows. Key component of the proton channel; it plays a direct role in the translocation of protons across the membrane. This Enterococcus faecalis (strain ATCC 700802 / V583) protein is ATP synthase subunit a.